The following is a 235-amino-acid chain: Large ribosomal subunit protein uL1 (235 aa).

Belongs to the universal ribosomal protein uL1 family. Part of the 50S ribosomal subunit.

Functionally, binds directly to 23S rRNA. The L1 stalk is quite mobile in the ribosome, and is involved in E site tRNA release. In terms of biological role, protein L1 is also a translational repressor protein, it controls the translation of the L11 operon by binding to its mRNA. The chain is Large ribosomal subunit protein uL1 from Prochlorococcus marinus (strain MIT 9301).